Here is a 349-residue protein sequence, read N- to C-terminus: Cell adhesion molecule CEACAM8 (349 aa).

Positions Met1–Ala34 are cleaved as a signal peptide. The region spanning Gln35–Pro142 is the Ig-like V-type domain. N-linked (GlcNAc...) asparagine glycosylation is found at Asn104, Asn111, Asn115, Asn152, Asn173, Asn197, Asn224, Asn256, Asn274, Asn288, and Asn309. 2 Ig-like C2-type domains span residues Pro145 to Asn232 and Pro237 to Ser319. A disulfide bridge connects residues Cys167 and Cys215. Cys259 and Cys299 form a disulfide bridge. Asp320 carries GPI-anchor amidated aspartate lipidation. Residues Ala321–Ile349 constitute a propeptide, removed in mature form.

It belongs to the immunoglobulin superfamily. CEA family. Monomer. Heterodimer with CEACAM6; heterodimerizes via its Ig-like V-type domain. Glycosylated. In terms of tissue distribution, expressed in leukocytes of chronic myeloid Leukemia patients and bone marrow.

It is found in the cell membrane. The protein localises to the cell surface. Its function is as follows. Cell surface glycoprotein that plays a role in cell adhesion in a calcium-independent manner. Mediates heterophilic cell adhesion with other carcinoembryonic antigen-related cell adhesion molecules, such as CEACAM6. Heterophilic interaction with CEACAM8 occurs in activated neutrophils. This Homo sapiens (Human) protein is Cell adhesion molecule CEACAM8.